A 95-amino-acid chain; its full sequence is UPF0235 protein MS0322 (95 aa).

The protein belongs to the UPF0235 family.

The protein is UPF0235 protein MS0322 of Mannheimia succiniciproducens (strain KCTC 0769BP / MBEL55E).